Consider the following 302-residue polypeptide: Late embryogenesis abundant protein D-29 (302 aa).

Disordered regions lie at residues 25 to 93 (HMPS…AKEY), 168 to 193 (VKNA…LADS), and 205 to 302 (AKEK…NHKN). Basic and acidic residues-rich tracts occupy residues 34–70 (RDYS…HAAN) and 79–93 (AKDR…AKEY). Residues 205-286 (AKEKVRDMAD…KAEETIESAK (82 aa)) show a composition bias toward basic and acidic residues.

This sequence belongs to the LEA type 1 family.

Functionally, LEA protein are late embryonic proteins abundant in higher plant seed embryos. There are two subsets of LEA proteins (5a and 5b), the first ones are expressed when the cotyledon weight reach 80 mg and the second set are expressed above 100 mg. The function of those proteins is not known. The chain is Late embryogenesis abundant protein D-29 from Gossypium hirsutum (Upland cotton).